The primary structure comprises 264 residues: Thymidylate synthase (264 aa).

Residue R21 coordinates dUMP. (6R)-5,10-methylene-5,6,7,8-tetrahydrofolate is bound at residue H51. Position 126 to 127 (126 to 127 (RR)) interacts with dUMP. C146 functions as the Nucleophile in the catalytic mechanism. Residues 166–169 (RSAD), N177, and 207–209 (HLY) contribute to the dUMP site. Residue D169 participates in (6R)-5,10-methylene-5,6,7,8-tetrahydrofolate binding. A263 provides a ligand contact to (6R)-5,10-methylene-5,6,7,8-tetrahydrofolate.

This sequence belongs to the thymidylate synthase family. Bacterial-type ThyA subfamily. As to quaternary structure, homodimer.

It is found in the cytoplasm. The catalysed reaction is dUMP + (6R)-5,10-methylene-5,6,7,8-tetrahydrofolate = 7,8-dihydrofolate + dTMP. The protein operates within pyrimidine metabolism; dTTP biosynthesis. Functionally, catalyzes the reductive methylation of 2'-deoxyuridine-5'-monophosphate (dUMP) to 2'-deoxythymidine-5'-monophosphate (dTMP) while utilizing 5,10-methylenetetrahydrofolate (mTHF) as the methyl donor and reductant in the reaction, yielding dihydrofolate (DHF) as a by-product. This enzymatic reaction provides an intracellular de novo source of dTMP, an essential precursor for DNA biosynthesis. The sequence is that of Thymidylate synthase from Rhodopirellula baltica (strain DSM 10527 / NCIMB 13988 / SH1).